Consider the following 221-residue polypeptide: Molybdenum cofactor guanylyltransferase (221 aa).

Residues 18-20, K35, N63, D81, and D112 contribute to the GTP site; that span reads IAG. D112 is a binding site for Mg(2+).

This sequence belongs to the MobA family. In terms of assembly, monomer. It depends on Mg(2+) as a cofactor.

It is found in the cytoplasm. The catalysed reaction is Mo-molybdopterin + GTP + H(+) = Mo-molybdopterin guanine dinucleotide + diphosphate. Its function is as follows. Transfers a GMP moiety from GTP to Mo-molybdopterin (Mo-MPT) cofactor (Moco or molybdenum cofactor) to form Mo-molybdopterin guanine dinucleotide (Mo-MGD) cofactor. The sequence is that of Molybdenum cofactor guanylyltransferase from Brucella abortus (strain S19).